The primary structure comprises 1704 residues: MAVLRQLALLLWKNYTLQKRKVLVTVLELFLPLLFSGILIWLRLKIQSENVPNATIYPGQSIQELPLFFTFPPPGDTWELAYIPSHSDAAKTVTETVRRALVINMRVRGFPSEKDFEDYIRYDNCSSSVLAAVVFEHPFNHSKEPLPLAVKYHLRFSYTRRNYMWTQTGSFFLKETEGWHTTSLFPLFPNPGPREPTSPDGGEPGYIREGFLAVQHAVDRAIMEYHADAATRQLFQRLTVTIKRFPYPPFIADPFLVAIQYQLPLLLLLSFTYTALTIARAVVQEKERRLKEYMRMMGLSSWLHWSAWFLLFFLFLLIAASFMTLLFCVKVKPNVAVLSRSDPSLVLAFLLCFAISTISFSFMVSTFFSKANMAAAFGGFLYFFTYIPYFFVAPRYNWMTLSQKLCSCLLSNVAMAMGAQLIGKFEAKGMGIQWRDLLSPVNVDDDFCFGQVLGMLLLDSVLYGLVTWYMEAVFPGQFGVPQPWYFFIMPSYWCGKPRAVAGKEEEDSDPEKALRNEYFEAEPEDLVAGIKIKHLSKVFRVGNKDRAAVRDLNLNLYEGQITVLLGHNGAGKTTTLSMLTGLFPPTSGRAYISGYEISQDMVQIRKSLGLCPQHDILFDNLTVAEHLYFYAQLKGLSRQKCPEEVKQMLHIIGLEDKWNSRSRFLSGGMRRKLSIGIALIAGSKVLILDEPTSGMDAISRRAIWDLLQRQKSDRTIVLTTHFMDEADLLGDRIAIMAKGELQCCGSSLFLKQKYGAGYHMTLVKEPHCNPEDISQLVHHHVPNATLESSAGAELSFILPRESTHRFEGLFAKLEKKQKELGIASFGASITTMEEVFLRVGKLVDSSMDIQAIQLPALQYQHERRASDWAVDSNLCGAMDPSDGIGALIEEERTAVKLNTGLALHCQQFWAMFLKKAAYSWREWKMVAAQVLVPLTCVTLALLAINYSSELFDDPMLRLTLGEYGRTVVPFSVPGTSQLGQQLSEHLKDALQAEGQEPREVLGDLEEFLIFRASVEGGGFNERCLVAASFRDVGERTVVNALFNNQAYHSPATALAVVDNLLFKLLCGPHASIVVSNFPQPRSALQAAKDQFNEGRKGFDIALNLLFAMAFLASTFSILAVSERAVQAKHVQFVSGVHVASFWLSALLWDLISFLIPSLLLLVVFKAFDVRAFTRDGHMADTLLLLLLYGWAIIPLMYLMNFFFLGAATAYTRLTIFNILSGIATFLMVTIMRIPAVKLEELSKTLDHVFLVLPNHCLGMAVSSFYENYETRRYCTSSEVAAHYCKKYNIQYQENFYAWSAPGVGRFVASMAASGCAYLILLFLIETNLLQRLRGILCALRRRRTLTELYTRMPVLPEDQDVADERTRILAPSPDSLLHTPLIIKELSKVYEQRVPLLAVDRLSLAVQKGECFGLLGFNGAGKTTTFKMLTGEESLTSGDAFVGGHRISSDVGKVRQRIGYCPQFDALLDHMTGREMLVMYARLRGIPERHIGACVENTLRGLLLEPHANKLVRTYSGGNKRKLSTGIALIGEPAVIFLDEPSTGMDPVARRLLWDTVARARESGKAIIITSHSMEECEALCTRLAIMVQGQFKCLGSPQHLKSKFGSGYSLRAKVQSEGQQEALEEFKAFVDLTFPGSVLEDEHQGMVHYHLPGRDLSWAKVFGILEKAKEKYGVDDYSVSQISLEQVFLSFAHLQPPTAEEGR.

N-linked (GlcNAc...) asparagine glycosylation occurs at asparagine 14. Residues 22-42 (VLVTVLELFLPLLFSGILIWL) traverse the membrane as a helical segment. 3 N-linked (GlcNAc...) asparagine glycosylation sites follow: asparagine 53, asparagine 124, and asparagine 140. A run of 6 helical transmembrane segments spans residues 261–283 (YQLPLLLLLSFTYTALTIARAVV), 307–327 (AWFLLFFLFLLIAASFMTLLF), 344–364 (SLVLAFLLCFAISTISFSFMV), 373–393 (MAAAFGGFLYFFTYIPYFFVA), 405–425 (LCSCLLSNVAMAMGAQLIGKF), and 447–467 (FCFGQVLGMLLLDSVLYGLVT). In terms of domain architecture, ABC transporter 1 spans 530–763 (IKIKHLSKVF…YGAGYHMTLV (234 aa)). Residue 566–573 (GHNGAGKT) coordinates ATP. Asparagine 620 and asparagine 783 each carry an N-linked (GlcNAc...) asparagine glycan. The next 7 membrane-spanning stretches (helical) occupy residues 925–945 (MVAAQVLVPLTCVTLALLAIN), 1100–1120 (IALNLLFAMAFLASTFSILAV), 1144–1164 (SALLWDLISFLIPSLLLLVVF), 1183–1203 (LLLLLYGWAIIPLMYLMNFFF), 1213–1233 (LTIFNILSGIATFLMVTIMRI), 1245–1265 (LDHVFLVLPNHCLGMAVSSFY), and 1306–1326 (FVASMAASGCAYLILLFLIET). Residues 1381–1614 (LIIKELSKVY…FGSGYSLRAK (234 aa)) form the ABC transporter 2 domain. 1416-1423 (GFNGAGKT) is an ATP binding site.

The protein belongs to the ABC transporter superfamily. ABCA family. As to quaternary structure, homooligomer; disulfide-linked. Post-translationally, N-glycosylated. Localization at intracellular vesicles is accompanied by processing of oligosaccharide from high mannose type to complex type. N-linked glycosylation at Asn-124 and Asn-140 is required for stability and efficient anterograde trafficking and prevents from proteasomal degradation. Proteolytically cleaved by CTSL and to a lower extent by CTSB within multivesicular bodies (MVB) and lamellar bodies (LB) leading to a mature form of 150 kDa. In terms of tissue distribution, expressed in brain, pancreas, skeletal muscle and heart. Highly expressed in the lung in an AT2-cell-specific manner. Weakly expressed in placenta, kidney and liver. Also expressed in medullary thyroid carcinoma cells (MTC) and in C-cell carcinoma.

It localises to the endosome. It is found in the multivesicular body membrane. The protein localises to the cytoplasmic vesicle membrane. Its subcellular location is the late endosome membrane. The protein resides in the lysosome membrane. The catalysed reaction is ATP + H2O + xenobioticSide 1 = ADP + phosphate + xenobioticSide 2.. It catalyses the reaction a 1,2-diacyl-sn-glycero-3-phosphocholine(in) + ATP + H2O = a 1,2-diacyl-sn-glycero-3-phosphocholine(out) + ADP + phosphate + H(+). The enzyme catalyses ATP + H2O + phospholipidSide 1 = ADP + phosphate + phospholipidSide 2.. It carries out the reaction 1,2-dihexadecanoyl-sn-glycero-3-phosphocholine(in) + ATP + H2O = 1,2-dihexadecanoyl-sn-glycero-3-phosphocholine(out) + ADP + phosphate + H(+). The catalysed reaction is cholesterol(in) + ATP + H2O = cholesterol(out) + ADP + phosphate + H(+). It catalyses the reaction a 1,2-diacyl-sn-glycero-3-phospho-(1'-sn-glycerol)(in) + ATP + H2O = a 1,2-diacyl-sn-glycero-3-phospho-(1'-sn-glycerol)(out) + ADP + phosphate + H(+). The ATP-dependent phosphatidylcholine transport is competitively inhibited by miltefosine. Functionally, catalyzes the ATP-dependent transport of phospholipids such as phosphatidylcholine and phosphoglycerol from the cytoplasm into the lumen side of lamellar bodies, in turn participates in the lamellar bodies biogenesis and homeostasis of pulmonary surfactant. Transports preferentially phosphatidylcholine containing short acyl chains. In addition plays a role as an efflux transporter of miltefosine across macrophage membranes and free cholesterol (FC) through intralumenal vesicles by removing FC from the cell as a component of surfactant and protects cells from free cholesterol toxicity. The protein is Phospholipid-transporting ATPase ABCA3 of Homo sapiens (Human).